We begin with the raw amino-acid sequence, 1029 residues long: Chitin synthase 2 (1029 aa).

Disordered stretches follow at residues 1 to 160 (MDRP…GARS), 174 to 216 (SDVD…SHLR), and 234 to 257 (AHYG…QKSR). Over residues 61–77 (PSVSSIHSRPSSISNIP) the composition is skewed to low complexity. Basic and acidic residues predominate over residues 244 to 257 (DQQRRGVREPQKSR). Residue Asn348 is glycosylated (N-linked (GlcNAc...) asparagine). The next 8 membrane-spanning stretches (helical) occupy residues 639–659 (WLNG…QLWA), 681–701 (VLFT…VAGG), 716–736 (LYIF…QFIL), 752–772 (SMVI…YIVI), 791–811 (NLIV…FIYL), 820–840 (SIQY…YAFC), 918–938 (YMVV…SEIY), and 952–972 (ILWS…TFAI).

The protein belongs to the chitin synthase family. Class II subfamily.

It localises to the cell membrane. The enzyme catalyses [(1-&gt;4)-N-acetyl-beta-D-glucosaminyl](n) + UDP-N-acetyl-alpha-D-glucosamine = [(1-&gt;4)-N-acetyl-beta-D-glucosaminyl](n+1) + UDP + H(+). Functionally, polymerizes chitin, a structural polymer of the cell wall and septum, by transferring the sugar moiety of UDP-GlcNAc to the non-reducing end of the growing chitin polymer. Plays an important role in cell wall integrity and has distinct functions in invasive hyphae and vegetative hyphae, but is not involved in plant infection. The protein is Chitin synthase 2 of Pyricularia oryzae (strain 70-15 / ATCC MYA-4617 / FGSC 8958) (Rice blast fungus).